We begin with the raw amino-acid sequence, 388 residues long: Cell adhesion molecule 4 (388 aa).

Positions 1-20 (MGRARRFQWPLLLLWAAAAG) are cleaved as a signal peptide. The Ig-like V-type domain occupies 21–119 (PGTAQEVQTE…DTHHQIATLT (99 aa)). Topologically, residues 25-324 (QEVQTENVTV…VEAQTSVPYA (300 aa)) are extracellular. N-linked (GlcNAc...) asparagine glycans are attached at residues asparagine 31 and asparagine 67. 3 disulfides stabilise this stretch: cysteine 44–cysteine 104, cysteine 145–cysteine 199, and cysteine 245–cysteine 291. 2 consecutive Ig-like C2-type domains span residues 124–219 (PENP…YVLD) and 224–307 (PTAR…YVLV). An N-linked (GlcNAc...) asparagine glycan is attached at asparagine 286. Residues 325 to 345 (IVGGILALLVFLIICVLVGMV) traverse the membrane as a helical segment. The Cytoplasmic portion of the chain corresponds to 346–388 (WCSVRQKGSYLTHEASGLDEQGEAREAFLNGSDGHKRKEEFFI). Serine 361 is modified (phosphoserine).

The protein belongs to the nectin family. Monomer and homodimer. Post-translationally, N-glycosylated.

The protein resides in the membrane. Involved in the cell-cell adhesion. Has calcium- and magnesium-independent cell-cell adhesion activity. May have tumor-suppressor activity. The sequence is that of Cell adhesion molecule 4 (Cadm4) from Rattus norvegicus (Rat).